We begin with the raw amino-acid sequence, 203 residues long: Transcriptional regulator GfcR (203 aa).

This sequence belongs to the purine/pyrimidine phosphoribosyltransferase family. GfcR subfamily.

The protein is Transcriptional regulator GfcR of Methanococcoides burtonii (strain DSM 6242 / NBRC 107633 / OCM 468 / ACE-M).